Reading from the N-terminus, the 194-residue chain is Peptidyl-tRNA hydrolase (194 aa).

Y17 serves as a coordination point for tRNA. The active-site Proton acceptor is H22. Residues Y68, N70, and N116 each coordinate tRNA.

This sequence belongs to the PTH family. As to quaternary structure, monomer.

The protein localises to the cytoplasm. The enzyme catalyses an N-acyl-L-alpha-aminoacyl-tRNA + H2O = an N-acyl-L-amino acid + a tRNA + H(+). Its function is as follows. Hydrolyzes ribosome-free peptidyl-tRNAs (with 1 or more amino acids incorporated), which drop off the ribosome during protein synthesis, or as a result of ribosome stalling. Functionally, catalyzes the release of premature peptidyl moieties from peptidyl-tRNA molecules trapped in stalled 50S ribosomal subunits, and thus maintains levels of free tRNAs and 50S ribosomes. The sequence is that of Peptidyl-tRNA hydrolase from Pseudomonas fluorescens (strain ATCC BAA-477 / NRRL B-23932 / Pf-5).